Here is a 156-residue protein sequence, read N- to C-terminus: Calcium-binding protein A (156 aa).

4 consecutive EF-hand domains span residues Ala4 to Lys39, Asp40 to Lys75, Ala80 to Asp115, and Ala118 to Leu153. Ca(2+)-binding residues include Asp17, Asn19, Asp21, Asn23, Glu28, Asp53, Asp55, Asp57, Glu64, Asp93, Asp95, Asp97, Arg99, Glu104, Asp131, Asp133, Asp135, and Glu142.

The protein is Calcium-binding protein A (cbpA) of Dictyostelium discoideum (Social amoeba).